The following is an 86-amino-acid chain: Putative membrane protein insertion efficiency factor (86 aa).

It belongs to the UPF0161 family.

Its subcellular location is the cell membrane. Its function is as follows. Could be involved in insertion of integral membrane proteins into the membrane. The protein is Putative membrane protein insertion efficiency factor of Streptococcus pyogenes serotype M1.